The primary structure comprises 572 residues: Isocitrate dehydrogenase kinase/phosphatase (572 aa).

ATP contacts are provided by residues 317-323 (APGVRGM) and Lys-338. Asp-373 is an active-site residue.

It belongs to the AceK family.

The protein resides in the cytoplasm. It carries out the reaction L-seryl-[isocitrate dehydrogenase] + ATP = O-phospho-L-seryl-[isocitrate dehydrogenase] + ADP + H(+). Functionally, bifunctional enzyme which can phosphorylate or dephosphorylate isocitrate dehydrogenase (IDH) on a specific serine residue. This is a regulatory mechanism which enables bacteria to bypass the Krebs cycle via the glyoxylate shunt in response to the source of carbon. When bacteria are grown on glucose, IDH is fully active and unphosphorylated, but when grown on acetate or ethanol, the activity of IDH declines drastically concomitant with its phosphorylation. The protein is Isocitrate dehydrogenase kinase/phosphatase of Ectopseudomonas mendocina (strain ymp) (Pseudomonas mendocina).